A 297-amino-acid polypeptide reads, in one-letter code: Ubiquinol oxidase 2, mitochondrial (297 aa).

The segment at 17-43 is disordered; that stretch reads VALNDKQHDKKVENGGAAASGGGDGGD. A helical transmembrane segment spans residues 122–142; that stretch reads AMMLETVAAVPGMVGGMLLHC. Positions 126, 165, and 168 each coordinate Fe cation. The helical transmembrane segment at 184 to 204 threads the bilayer; sequence ALVFAVQGVFINAYFVTYLLS. The Fe cation site is built by glutamate 216, glutamate 267, and histidine 270.

Belongs to the alternative oxidase family. In terms of assembly, homodimer; disulfide-linked. Fe cation serves as cofactor.

It localises to the mitochondrion inner membrane. It catalyses the reaction 2 a ubiquinol + O2 = 2 a ubiquinone + 2 H2O. Functionally, catalyzes the cyanide-resistant oxidation of ubiquinol and the reduction of molecular oxygen to water, but does not translocate protons and consequently is not linked to oxidative phosphorylation. May increase respiration when the cytochrome respiratory pathway is restricted, or in response to low temperatures. This chain is Ubiquinol oxidase 2, mitochondrial (AOX2), found in Nicotiana tabacum (Common tobacco).